Reading from the N-terminus, the 61-residue chain is uncharacterized protein (61 aa).

This is an uncharacterized protein from Autographa californica nuclear polyhedrosis virus (AcMNPV).